We begin with the raw amino-acid sequence, 536 residues long: Zinc finger CCCH domain-containing protein 18 (536 aa).

A C3H1-type zinc finger spans residues 156–183 (EFPVKICHYFNKGFCKHGNNCRYFHGQI). One can recognise an HTH OST-type domain in the interval 211–294 (SLEKLEGEII…HGQHSVILAE (84 aa)). The 76-residue stretch at 317–392 (RQIYLTFPAE…ARVLVKPYRE (76 aa)) folds into the RRM domain.

In terms of biological role, possesses ribonuclease activity in vitro. This chain is Zinc finger CCCH domain-containing protein 18, found in Arabidopsis thaliana (Mouse-ear cress).